A 61-amino-acid polypeptide reads, in one-letter code: Photosystem II reaction center protein K (61 aa).

Residues 1 to 24 (MLNIFSLICICLNSALYSSNFFFA) constitute a propeptide that is removed on maturation. Residues 40-60 (MPVIPLFFFLLAFVWQAAVSF) traverse the membrane as a helical segment.

Belongs to the PsbK family. As to quaternary structure, PSII is composed of 1 copy each of membrane proteins PsbA, PsbB, PsbC, PsbD, PsbE, PsbF, PsbH, PsbI, PsbJ, PsbK, PsbL, PsbM, PsbT, PsbX, PsbY, PsbZ, Psb30/Ycf12, at least 3 peripheral proteins of the oxygen-evolving complex and a large number of cofactors. It forms dimeric complexes.

Its subcellular location is the plastid. The protein resides in the chloroplast thylakoid membrane. In terms of biological role, one of the components of the core complex of photosystem II (PSII). PSII is a light-driven water:plastoquinone oxidoreductase that uses light energy to abstract electrons from H(2)O, generating O(2) and a proton gradient subsequently used for ATP formation. It consists of a core antenna complex that captures photons, and an electron transfer chain that converts photonic excitation into a charge separation. The polypeptide is Photosystem II reaction center protein K (Vitis vinifera (Grape)).